A 363-amino-acid chain; its full sequence is Peptide chain release factor 2 (363 aa).

Position 251 is an N5-methylglutamine (Gln251).

The protein belongs to the prokaryotic/mitochondrial release factor family. Post-translationally, methylated by PrmC. Methylation increases the termination efficiency of RF2.

It localises to the cytoplasm. Peptide chain release factor 2 directs the termination of translation in response to the peptide chain termination codons UGA and UAA. The sequence is that of Peptide chain release factor 2 (prfB) from Helicobacter pylori (strain ATCC 700392 / 26695) (Campylobacter pylori).